Here is a 90-residue protein sequence, read N- to C-terminus: TSPNINGFWVMLENDEQIEFPIKPLIDHARPTFRQIMSRFSDLAEAYIEKRNFERAYMPRYGLQRNLTDMSLRRYAFDFYEMTSKAPARA.

Belongs to the potyviridae genome polyprotein family. Genome polyprotein of potyviruses undergoes post-translational proteolytic processing by the main proteinase NIa-pro resulting in the production of at least ten individual proteins. The P1 proteinase and the HC-pro cleave only their respective C-termini autocatalytically. 6K1 is essential for proper proteolytic separation of P3 from CI.

The protein resides in the virion. Involved in aphid transmission, cell-to-cell and systemis movement, encapsidation of the viral RNA and in the regulation of viral RNA amplification. In Gloriosa stripe mosaic virus (GSMV), this protein is Genome polyprotein.